Here is a 341-residue protein sequence, read N- to C-terminus: UDP-3-O-acylglucosamine N-acyltransferase (341 aa).

The active-site Proton acceptor is H241.

This sequence belongs to the transferase hexapeptide repeat family. LpxD subfamily. In terms of assembly, homotrimer.

The enzyme catalyses a UDP-3-O-[(3R)-3-hydroxyacyl]-alpha-D-glucosamine + a (3R)-hydroxyacyl-[ACP] = a UDP-2-N,3-O-bis[(3R)-3-hydroxyacyl]-alpha-D-glucosamine + holo-[ACP] + H(+). It functions in the pathway bacterial outer membrane biogenesis; LPS lipid A biosynthesis. Catalyzes the N-acylation of UDP-3-O-acylglucosamine using 3-hydroxyacyl-ACP as the acyl donor. Is involved in the biosynthesis of lipid A, a phosphorylated glycolipid that anchors the lipopolysaccharide to the outer membrane of the cell. The sequence is that of UDP-3-O-acylglucosamine N-acyltransferase from Christiangramia forsetii (strain DSM 17595 / CGMCC 1.15422 / KT0803) (Gramella forsetii).